A 246-amino-acid polypeptide reads, in one-letter code: Thaumatin-like protein 1a (246 aa).

The first 24 residues, 1–24 (MMKSQVASLLGLTLAILFFSGAHA), serve as a signal peptide directing secretion. Intrachain disulfides connect C33–C245, C81–C91, C96–C103, C151–C234, C156–C217, C164–C180, C184–C193, and C194–C204.

The protein belongs to the thaumatin family.

It localises to the secreted. This is Thaumatin-like protein 1a (TL1) from Malus domestica (Apple).